The primary structure comprises 1002 residues: TOG array regulator of axonemal microtubules protein 2 (1002 aa).

5 disordered regions span residues 54 to 74 (SSVL…EDQS), 131 to 214 (KRRL…SAQE), 332 to 351 (ETRS…KVQV), 402 to 421 (PLRG…PRRN), and 426 to 450 (LQRK…GFAR).

The protein belongs to the Crescerin family.

The chain is TOG array regulator of axonemal microtubules protein 2 (Togaram2) from Mus musculus (Mouse).